Consider the following 254-residue polypeptide: Uracil-DNA glycosylase (254 aa).

Asp-78 functions as the Proton acceptor in the catalytic mechanism.

This sequence belongs to the uracil-DNA glycosylase (UDG) superfamily. UNG family.

Its subcellular location is the cytoplasm. The catalysed reaction is Hydrolyzes single-stranded DNA or mismatched double-stranded DNA and polynucleotides, releasing free uracil.. Excises uracil residues from the DNA which can arise as a result of misincorporation of dUMP residues by DNA polymerase or due to deamination of cytosine. In Bordetella petrii (strain ATCC BAA-461 / DSM 12804 / CCUG 43448), this protein is Uracil-DNA glycosylase.